Here is a 152-residue protein sequence, read N- to C-terminus: Sec-independent protein translocase protein TatB (152 aa).

Residues 1–21 traverse the membrane as a helical segment; the sequence is MFDLGWSELLVIGVVALIVVG.

It belongs to the TatB family. As to quaternary structure, the Tat system comprises two distinct complexes: a TatABC complex, containing multiple copies of TatA, TatB and TatC subunits, and a separate TatA complex, containing only TatA subunits. Substrates initially bind to the TatABC complex, which probably triggers association of the separate TatA complex to form the active translocon.

Its subcellular location is the cell inner membrane. Its function is as follows. Part of the twin-arginine translocation (Tat) system that transports large folded proteins containing a characteristic twin-arginine motif in their signal peptide across membranes. Together with TatC, TatB is part of a receptor directly interacting with Tat signal peptides. TatB may form an oligomeric binding site that transiently accommodates folded Tat precursor proteins before their translocation. This chain is Sec-independent protein translocase protein TatB, found in Ruegeria pomeroyi (strain ATCC 700808 / DSM 15171 / DSS-3) (Silicibacter pomeroyi).